The following is a 565-amino-acid chain: Oxygen-dependent choline dehydrogenase (565 aa).

6–35 (DYIIVGAGSAGNTLATRLTEDASVSVLLLE) contributes to the FAD binding site. Residues 182–203 (QQEGFGPMDRSVTKKGRRSSTA) form a disordered region. His475 acts as the Proton acceptor in catalysis.

The protein belongs to the GMC oxidoreductase family. Requires FAD as cofactor.

The enzyme catalyses choline + A = betaine aldehyde + AH2. It carries out the reaction betaine aldehyde + NAD(+) + H2O = glycine betaine + NADH + 2 H(+). Its pathway is amine and polyamine biosynthesis; betaine biosynthesis via choline pathway; betaine aldehyde from choline (cytochrome c reductase route): step 1/1. Its function is as follows. Involved in the biosynthesis of the osmoprotectant glycine betaine. Catalyzes the oxidation of choline to betaine aldehyde and betaine aldehyde to glycine betaine at the same rate. The polypeptide is Oxygen-dependent choline dehydrogenase (Pseudomonas entomophila (strain L48)).